The following is a 317-amino-acid chain: Aspartate carbamoyltransferase catalytic subunit (317 aa).

Arg64 and Thr65 together coordinate carbamoyl phosphate. Lys92 contributes to the L-aspartate binding site. 3 residues coordinate carbamoyl phosphate: Arg114, His142, and Gln145. Positions 176 and 230 each coordinate L-aspartate. Carbamoyl phosphate contacts are provided by Gly271 and Pro272.

It belongs to the aspartate/ornithine carbamoyltransferase superfamily. ATCase family. As to quaternary structure, heterododecamer (2C3:3R2) of six catalytic PyrB chains organized as two trimers (C3), and six regulatory PyrI chains organized as three dimers (R2).

The catalysed reaction is carbamoyl phosphate + L-aspartate = N-carbamoyl-L-aspartate + phosphate + H(+). It functions in the pathway pyrimidine metabolism; UMP biosynthesis via de novo pathway; (S)-dihydroorotate from bicarbonate: step 2/3. Functionally, catalyzes the condensation of carbamoyl phosphate and aspartate to form carbamoyl aspartate and inorganic phosphate, the committed step in the de novo pyrimidine nucleotide biosynthesis pathway. The polypeptide is Aspartate carbamoyltransferase catalytic subunit (Nitratidesulfovibrio vulgaris (strain DP4) (Desulfovibrio vulgaris)).